The following is an 89-amino-acid chain: Cell division topological specificity factor (89 aa).

Belongs to the MinE family.

Prevents the cell division inhibition by proteins MinC and MinD at internal division sites while permitting inhibition at polar sites. This ensures cell division at the proper site by restricting the formation of a division septum at the midpoint of the long axis of the cell. The sequence is that of Cell division topological specificity factor from Paracoccus denitrificans (strain Pd 1222).